Reading from the N-terminus, the 105-residue chain is Co-chaperonin GroES (105 aa).

The protein belongs to the GroES chaperonin family. As to quaternary structure, heptamer of 7 subunits arranged in a ring. Interacts with the chaperonin GroEL.

It is found in the cytoplasm. Functionally, together with the chaperonin GroEL, plays an essential role in assisting protein folding. The GroEL-GroES system forms a nano-cage that allows encapsulation of the non-native substrate proteins and provides a physical environment optimized to promote and accelerate protein folding. GroES binds to the apical surface of the GroEL ring, thereby capping the opening of the GroEL channel. In Methylovorus sp. (strain SS1 / DSM 11726), this protein is Co-chaperonin GroES.